Here is a 329-residue protein sequence, read N- to C-terminus: Phenylalanine--tRNA ligase alpha subunit (329 aa).

E254 contributes to the Mg(2+) binding site.

This sequence belongs to the class-II aminoacyl-tRNA synthetase family. Phe-tRNA synthetase alpha subunit type 1 subfamily. Tetramer of two alpha and two beta subunits. Requires Mg(2+) as cofactor.

Its subcellular location is the cytoplasm. It carries out the reaction tRNA(Phe) + L-phenylalanine + ATP = L-phenylalanyl-tRNA(Phe) + AMP + diphosphate + H(+). This is Phenylalanine--tRNA ligase alpha subunit from Haemophilus influenzae (strain 86-028NP).